Consider the following 228-residue polypeptide: Putative NAC domain-containing protein 61 (228 aa).

The NAC domain maps to 5–156; it reads LSVGFRFYPT…KSGSSRAFDR (152 aa). Disordered stretches follow at residues 77–96 and 166–197; these read ARGGRPSRTTGSGYWKATGS and RNLPSNGVETSSRATISTSPETSHSGGNQVDL. Residues 80-89 show a composition bias toward low complexity; the sequence is GRPSRTTGSG. The segment covering 168–193 has biased composition (polar residues); that stretch reads LPSNGVETSSRATISTSPETSHSGGN.

The protein resides in the nucleus. The protein is Putative NAC domain-containing protein 61 (NAC061) of Arabidopsis thaliana (Mouse-ear cress).